The chain runs to 174 residues: Large ribosomal subunit protein uL10 (174 aa).

It belongs to the universal ribosomal protein uL10 family. As to quaternary structure, part of the ribosomal stalk of the 50S ribosomal subunit. The N-terminus interacts with L11 and the large rRNA to form the base of the stalk. The C-terminus forms an elongated spine to which L12 dimers bind in a sequential fashion forming a multimeric L10(L12)X complex.

Functionally, forms part of the ribosomal stalk, playing a central role in the interaction of the ribosome with GTP-bound translation factors. The protein is Large ribosomal subunit protein uL10 of Geobacter sulfurreducens (strain ATCC 51573 / DSM 12127 / PCA).